The primary structure comprises 651 residues: Acetyl-coenzyme A synthetase (651 aa).

Residues 189–192, T311, and N335 contribute to the CoA site; that span reads RGGK. ATP is bound by residues 387–389, 411–416, D500, and R515; these read GEP and DTWWQT. S523 contributes to the CoA binding site. An ATP-binding site is contributed by R526. Residues V537, H539, and V542 each contribute to the Mg(2+) site. R584 lines the CoA pocket. The residue at position 609 (K609) is an N6-acetyllysine.

Belongs to the ATP-dependent AMP-binding enzyme family. It depends on Mg(2+) as a cofactor. In terms of processing, acetylated. Deacetylation by the SIR2-homolog deacetylase activates the enzyme.

The enzyme catalyses acetate + ATP + CoA = acetyl-CoA + AMP + diphosphate. In terms of biological role, catalyzes the conversion of acetate into acetyl-CoA (AcCoA), an essential intermediate at the junction of anabolic and catabolic pathways. AcsA undergoes a two-step reaction. In the first half reaction, AcsA combines acetate with ATP to form acetyl-adenylate (AcAMP) intermediate. In the second half reaction, it can then transfer the acetyl group from AcAMP to the sulfhydryl group of CoA, forming the product AcCoA. The chain is Acetyl-coenzyme A synthetase from Rhizobium etli (strain ATCC 51251 / DSM 11541 / JCM 21823 / NBRC 15573 / CFN 42).